Here is a 210-residue protein sequence, read N- to C-terminus: 7-carboxy-7-deazaguanine synthase (210 aa).

Substrate contacts are provided by residues 12–14 and R27; that span reads LQG. In terms of domain architecture, Radical SAM core spans 18-210; it reads QAGRAAVFCR…LQTHKYIGIP (193 aa). C31, C46, and C49 together coordinate [4Fe-4S] cluster. T51 contributes to the Mg(2+) binding site. T90 is a substrate binding site. Residues G92, 133–135, and 173–176 contribute to the S-adenosyl-L-methionine site; these read SPK and QPMD. Residue P210 coordinates substrate.

It belongs to the radical SAM superfamily. 7-carboxy-7-deazaguanine synthase family. As to quaternary structure, homodimer. [4Fe-4S] cluster is required as a cofactor. It depends on S-adenosyl-L-methionine as a cofactor. Mg(2+) serves as cofactor.

The enzyme catalyses 6-carboxy-5,6,7,8-tetrahydropterin + H(+) = 7-carboxy-7-deazaguanine + NH4(+). Its pathway is purine metabolism; 7-cyano-7-deazaguanine biosynthesis. Its function is as follows. Catalyzes the complex heterocyclic radical-mediated conversion of 6-carboxy-5,6,7,8-tetrahydropterin (CPH4) to 7-carboxy-7-deazaguanine (CDG), a step common to the biosynthetic pathways of all 7-deazapurine-containing compounds. The polypeptide is 7-carboxy-7-deazaguanine synthase (Bordetella pertussis (strain Tohama I / ATCC BAA-589 / NCTC 13251)).